Reading from the N-terminus, the 208-residue chain is Type 4 adapter protein LvgA (208 aa).

As to quaternary structure, the T4BSS is a complex nanomachine composed of several subcomplexes. This subunit is part of the Type IV Coupling Complex (T4CC), a subcomplex composed of the DotLMNYZ core and the IcmSW-LvgA adapter subunits, linked by the C-terminal tail of DotL. Interacts with DotL, IcmS and IcmW. Interacts with various effector proteins, including VpdB, SetA, PieA and SidH.

It localises to the cytoplasm. In terms of biological role, component of the Dot/Icm type IVB secretion system (T4BSS), which is used to inject bacterial effector proteins into eukaryotic host cells. Part of a subcomplex which recruits effector proteins and delivers them to the core transmembrane subcomplex. Is a critical subunit for binding a subset of effector proteins. Recognizes more than one type of binding motif. May be a critical factor that confers host specificity. The sequence is that of Type 4 adapter protein LvgA from Legionella pneumophila subsp. pneumophila (strain Philadelphia 1 / ATCC 33152 / DSM 7513).